Here is a 72-residue protein sequence, read N- to C-terminus: SRY-related protein AES4 (72 aa).

Residues 1 to 69 (VKRPMNAFMV…KHMADYPDYK (69 aa)) constitute a DNA-binding region (HMG box).

The protein resides in the nucleus. The chain is SRY-related protein AES4 from Alligator mississippiensis (American alligator).